The chain runs to 253 residues: uncharacterized protein (253 aa).

I17, S36, D62, N89, Y158, K162, V191, and T193 together coordinate NADP(+). The active-site Proton donor is Y158. The active-site Lowers pKa of active site Tyr is the K162.

This sequence belongs to the short-chain dehydrogenases/reductases (SDR) family.

The protein resides in the cytoplasm. The protein localises to the nucleus. This is an uncharacterized protein from Schizosaccharomyces pombe (strain 972 / ATCC 24843) (Fission yeast).